Consider the following 90-residue polypeptide: uncharacterized protein (90 aa).

The helical transmembrane segment at 12–32 threads the bilayer; the sequence is VVGGLSFWSFSAGVIMIVNAF.

The protein localises to the membrane. This is an uncharacterized protein from Mycoplasma pneumoniae (strain ATCC 29342 / M129 / Subtype 1) (Mycoplasmoides pneumoniae).